Here is a 156-residue protein sequence, read N- to C-terminus: Interleukin-36 receptor antagonist protein (156 aa).

A disulfide bridge connects residues cysteine 9 and cysteine 155.

This sequence belongs to the IL-1 family. Interacts with cargo receptor TMED10; the interaction mediates the translocation from the cytoplasm into the ERGIC (endoplasmic reticulum-Golgi intermediate compartment) and thereby secretion. Removal of N-terminal methionine is necessary for full antagonistic activity. As to expression, highly abundant in embryonic tissue and tissues containing epithelial cells.

The protein localises to the cytoplasm. It localises to the secreted. Its function is as follows. Inhibits the activity of interleukin-36 (IL36A,IL36B and IL36G) by binding to receptor IL1RL2/IL-36R and preventing its association with the coreceptor IL1RAP for signaling. Part of the IL-36 signaling system that is thought to be present in epithelial barriers and to take part in local inflammatory response; similar to the IL-1 system with which it shares the coreceptor. Proposed to play a role in skin inflammation. May be involved in the innate immune response to fungal pathogens. May activate an anti-inflammatory signaling pathway by recruiting SIGIRR. The sequence is that of Interleukin-36 receptor antagonist protein from Mus musculus (Mouse).